Reading from the N-terminus, the 384-residue chain is 23S rRNA (uracil(747)-C(5))-methyltransferase RlmC (384 aa).

Cysteine 7, cysteine 15, cysteine 18, and cysteine 94 together coordinate [4Fe-4S] cluster. Positions 219, 248, 269, and 316 each coordinate S-adenosyl-L-methionine. Cysteine 343 serves as the catalytic Nucleophile.

Belongs to the class I-like SAM-binding methyltransferase superfamily. RNA M5U methyltransferase family. RlmC subfamily.

It catalyses the reaction uridine(747) in 23S rRNA + S-adenosyl-L-methionine = 5-methyluridine(747) in 23S rRNA + S-adenosyl-L-homocysteine + H(+). Catalyzes the formation of 5-methyl-uridine at position 747 (m5U747) in 23S rRNA. This Shewanella sp. (strain MR-4) protein is 23S rRNA (uracil(747)-C(5))-methyltransferase RlmC.